A 687-amino-acid chain; its full sequence is Pentatricopeptide repeat-containing protein At3g09060 (687 aa).

PPR repeat units follow at residues 42 to 76, 77 to 107, 113 to 147, 148 to 182, 183 to 217, 218 to 253, 254 to 288, 289 to 323, 324 to 358, 359 to 392, 393 to 427, 428 to 462, 463 to 497, 498 to 532, 533 to 567, 568 to 602, 603 to 637, and 638 to 672; these read SAVV…ECKC, DEDV…MREI, AIRS…GVAP, NLQT…GFKP, DVFS…GVAP, DVTC…SVYP, NVKT…EREK, DLYT…KASI, DVVT…NSVN, IVSY…GYAA, DKTT…GGHL, DVYA…GVEL, NSHV…GCRP, TVVS…GWKP, DLKT…GLET, DVMM…NCTA, NLVT…GLQP, and DIIS…GIFP.

It belongs to the PPR family. P subfamily.

The protein is Pentatricopeptide repeat-containing protein At3g09060 of Arabidopsis thaliana (Mouse-ear cress).